Consider the following 192-residue polypeptide: Adenylate kinase (192 aa).

10–18 contacts ATP; the sequence is GVPGVGKTT.

It belongs to the archaeal adenylate kinase family.

It is found in the cytoplasm. It catalyses the reaction AMP + ATP = 2 ADP. In Methanoculleus marisnigri (strain ATCC 35101 / DSM 1498 / JR1), this protein is Adenylate kinase.